The sequence spans 290 residues: L-proline cis-3-hydroxylase 1 (290 aa).

Fe cation-binding residues include His107, Asp109, and His158. Residue Arg168 participates in 2-oxoglutarate binding.

Belongs to the L-proline cis-4-/cis-3-hydroxylase family. As to quaternary structure, homodimer. Requires Fe(2+) as cofactor.

The catalysed reaction is L-proline + 2-oxoglutarate + O2 = cis-3-hydroxy-L-proline + succinate + CO2. Its activity is regulated as follows. Inhibited by metal ions such as Co(2+), Zn(2+), Ni(2+) or Cu(2+). Is also inhibited by EDTA in vitro. Unlike the procollagen-proline cis-3- and trans-4-hydroxylases from mammals, does not necessarily require L-ascorbate for activity although it does increase the activity of the enzyme. Dioxygenase that catalyzes the 2-oxoglutarate-dependent selective hydroxylation of free L-proline to cis-3-hydroxy-L-proline (cis-3-Hyp). D-proline, trans-4-hydroxy-L-proline, cis-4-hydroxy-L-proline, cis-4-hydroxy-D-proline, and 3,4-dehydro-DL-proline are not substrates. This Streptomyces sp protein is L-proline cis-3-hydroxylase 1.